We begin with the raw amino-acid sequence, 198 residues long: tRNA (pseudouridine(54)-N(1))-methyltransferase (198 aa).

Leucine 128 is an S-adenosyl-L-methionine binding site.

It belongs to the methyltransferase superfamily. TrmY family. In terms of assembly, homodimer.

The protein localises to the cytoplasm. It catalyses the reaction pseudouridine(54) in tRNA + S-adenosyl-L-methionine = N(1)-methylpseudouridine(54) in tRNA + S-adenosyl-L-homocysteine + H(+). Its function is as follows. Specifically catalyzes the N1-methylation of pseudouridine at position 54 (Psi54) in tRNAs. The protein is tRNA (pseudouridine(54)-N(1))-methyltransferase of Haloferax volcanii (strain ATCC 29605 / DSM 3757 / JCM 8879 / NBRC 14742 / NCIMB 2012 / VKM B-1768 / DS2) (Halobacterium volcanii).